The sequence spans 128 residues: Large ribosomal subunit protein bL19 (128 aa).

It belongs to the bacterial ribosomal protein bL19 family.

Its function is as follows. This protein is located at the 30S-50S ribosomal subunit interface and may play a role in the structure and function of the aminoacyl-tRNA binding site. This Herminiimonas arsenicoxydans protein is Large ribosomal subunit protein bL19.